We begin with the raw amino-acid sequence, 208 residues long: N-(5'-phosphoribosyl)anthranilate isomerase (208 aa).

The protein belongs to the TrpF family.

The enzyme catalyses N-(5-phospho-beta-D-ribosyl)anthranilate = 1-(2-carboxyphenylamino)-1-deoxy-D-ribulose 5-phosphate. The protein operates within amino-acid biosynthesis; L-tryptophan biosynthesis; L-tryptophan from chorismate: step 3/5. This chain is N-(5'-phosphoribosyl)anthranilate isomerase, found in Methanococcus maripaludis (strain C7 / ATCC BAA-1331).